A 338-amino-acid chain; its full sequence is Anthranilate phosphoribosyltransferase (338 aa).

Residues Gly-78, 81 to 82, Ser-86, 88 to 91, 106 to 114, and Ser-118 each bind 5-phospho-alpha-D-ribose 1-diphosphate; these read GD, NIST, and KHGNKSVTS. An anthranilate-binding site is contributed by Gly-78. Ser-90 provides a ligand contact to Mg(2+). Asn-109 is a binding site for anthranilate. Arg-163 serves as a coordination point for anthranilate. Positions 222 and 223 each coordinate Mg(2+).

This sequence belongs to the anthranilate phosphoribosyltransferase family. As to quaternary structure, homodimer. Requires Mg(2+) as cofactor.

The catalysed reaction is N-(5-phospho-beta-D-ribosyl)anthranilate + diphosphate = 5-phospho-alpha-D-ribose 1-diphosphate + anthranilate. The protein operates within amino-acid biosynthesis; L-tryptophan biosynthesis; L-tryptophan from chorismate: step 2/5. Functionally, catalyzes the transfer of the phosphoribosyl group of 5-phosphorylribose-1-pyrophosphate (PRPP) to anthranilate to yield N-(5'-phosphoribosyl)-anthranilate (PRA). The polypeptide is Anthranilate phosphoribosyltransferase (Staphylococcus saprophyticus subsp. saprophyticus (strain ATCC 15305 / DSM 20229 / NCIMB 8711 / NCTC 7292 / S-41)).